We begin with the raw amino-acid sequence, 640 residues long: Probable potassium transport system protein Kup 1 (640 aa).

Transmembrane regions (helical) follow at residues 25–45 (LVLAALGVVYGDLGTSPLYAL), 65–85 (VVSLFLWSLILMVSVKYVMVL), 115–135 (AVGWVLLGLAGAAMLYGDGVI), 153–173 (PALAAYVVPATVVILAMLFMI), 181–201 (VGAAFGPILAAWFVAIAALGL), 227–247 (GFAGFVSLGAVVLCLTGAEAL), 263–283 (WYGLALPALILSYLGQGALLL), 305–325 (MVALSTLATIVASQALITAVF), 353–373 (IYLPLLNWTLMLATIAVVLGF), 381–401 (AAFGLAVSTTMAITTVLFAVL), 410–430 (WWAVALVAGSLFAIDLAFWLA), and 438–458 (GGWLPLLLGLAVFCVMGCWFG).

It belongs to the HAK/KUP transporter (TC 2.A.72) family.

The protein localises to the cell inner membrane. It catalyses the reaction K(+)(in) + H(+)(in) = K(+)(out) + H(+)(out). Functionally, transport of potassium into the cell. Likely operates as a K(+):H(+) symporter. This Chromobacterium violaceum (strain ATCC 12472 / DSM 30191 / JCM 1249 / CCUG 213 / NBRC 12614 / NCIMB 9131 / NCTC 9757 / MK) protein is Probable potassium transport system protein Kup 1.